The sequence spans 585 residues: A-type ATP synthase subunit A (585 aa).

Position 231–238 (231–238) interacts with ATP; it reads GPFGSGKT.

It belongs to the ATPase alpha/beta chains family. In terms of assembly, has multiple subunits with at least A(3), B(3), C, D, E, F, H, I and proteolipid K(x).

The protein resides in the cell membrane. The catalysed reaction is ATP + H2O + 4 H(+)(in) = ADP + phosphate + 5 H(+)(out). Functionally, component of the A-type ATP synthase that produces ATP from ADP in the presence of a proton gradient across the membrane. The A chain is the catalytic subunit. This chain is A-type ATP synthase subunit A, found in Desulfurococcus sp. (strain SY).